A 305-amino-acid polypeptide reads, in one-letter code: Phosphoribosylaminoimidazole-succinocarboxamide synthase (305 aa).

It belongs to the SAICAR synthetase family.

It carries out the reaction 5-amino-1-(5-phospho-D-ribosyl)imidazole-4-carboxylate + L-aspartate + ATP = (2S)-2-[5-amino-1-(5-phospho-beta-D-ribosyl)imidazole-4-carboxamido]succinate + ADP + phosphate + 2 H(+). Its pathway is purine metabolism; IMP biosynthesis via de novo pathway; 5-amino-1-(5-phospho-D-ribosyl)imidazole-4-carboxamide from 5-amino-1-(5-phospho-D-ribosyl)imidazole-4-carboxylate: step 1/2. The sequence is that of Phosphoribosylaminoimidazole-succinocarboxamide synthase from Tropheryma whipplei (strain Twist) (Whipple's bacillus).